We begin with the raw amino-acid sequence, 849 residues long: MASTATQNASTRYSQIWIDQPASLPFQDSINLIKEDKEKWKKEKTAFLIDYDWFEGYVDFIYGEGDNPGPITQWRLLDEKNELKHSLEESIDYSIVSASLWHMLVEWFGLEGLAIERKVLLVGLAAEQKPFVDIYPINFTLHVLFDPINGENTSYSPLYQIDEPYHSDEPYAFSFSRSDTLRSLYKQVMEAFQISDGTSFRLWYLNKSNLSSRFVSLSEFNDQPAIALLSEYAVCMTIFEIDIADGSLLLEFQHPNGEWLSDSITKEQNLTINKEIGLCGLYNLGNSCYMNSALQCMIHTHELTKYFLSDSYEKDINYNNPLGMMGKVALSYASLLKMIHHTADMHSVSPSSFKFIIGEFNTYFSGYRQQDSQEFIAFFLDGLHEDLNRIQIKPYFERPDLFDEHPLHVQRVANQCWDIHTKRNDSIIVQLFQGMYKSTLECSICYQKSTAFDPFMYLTLPLPTSAKWRHKVVYVPPFGTQSPVELYLELLMESTVIQMKFQATEKLQKMGLECGELTACDIYRGKVYKVLKNKDKISKKIHKWDHVVLYGSTANGLTIPIVHGCKRPAMPGSYQSNDVFGFPLQLNVRSRNVLTNDLVKEIVELYRVYAGIDVAIGTLQLGLKRMESKAGKWECIKEIEVKRFEIVEEEEIVIDDKTVIMCLWNDQQYEKLFYNCEWIFEKIQFHMESITLEDCLLEFSKPEQLDLQDSWYCPGCKAFRPATKRLEIWRLPKILVIHLNRFSGHGGDLRRRRKRRDLVVYPVFDLNLKQFLSPFIKDHEWLSSQKSMLYDLYAVDNHHGFMSNGHYTAYARDASSQTFFKFDDTAICEIDPEDIVTSSAYVLFYRAKN.

In terms of domain architecture, DUSP spans 20-120 (QPASLPFQDS…EGLAIERKVL (101 aa)). One can recognise a USP domain in the interval 279–848 (CGLYNLGNSC…SAYVLFYRAK (570 aa)). Cysteine 288 (nucleophile) is an active-site residue. Residue histidine 806 is the Proton acceptor of the active site.

The protein belongs to the peptidase C19 family.

It catalyses the reaction Thiol-dependent hydrolysis of ester, thioester, amide, peptide and isopeptide bonds formed by the C-terminal Gly of ubiquitin (a 76-residue protein attached to proteins as an intracellular targeting signal).. This chain is Probable ubiquitin carboxyl-terminal hydrolase 1 (ubp1), found in Schizosaccharomyces pombe (strain 972 / ATCC 24843) (Fission yeast).